A 513-amino-acid chain; its full sequence is Sphingolipid C9-methyltransferase (513 aa).

Transmembrane regions (helical) follow at residues Ile-52–Phe-72 and Thr-74–Met-94. Residues Tyr-222–Thr-223, Val-259–Gly-267, Thr-285–Gln-290, and Tyr-315–Arg-316 contribute to the S-adenosyl-L-methionine site.

The protein belongs to the CFA/CMAS family.

The protein localises to the membrane. It carries out the reaction a (4E,8E)-4-sphinga-4,8-dienine ceramide + S-adenosyl-L-methionine = a 9-methyl-(4E,8E)-sphinga-4,8-dienine ceramide + S-adenosyl-L-homocysteine + H(+). It participates in lipid metabolism; sphingolipid metabolism. Catalyzes methylation of the sphingoid base component of glucosylceramides (GluCers) at the C9-position. Sphingolipid C9-methylation requires 4,8-desaturated ceramides as substrates. Glucosylceramides play important roles in growth, differentiation and pathogenicity. The methyl group at the C9-position distinguishes fungal glucosylceramides from those of plants and animals, and may thus play a role in host-pathogen interactions enabling the host to recognize the fungal attack and initiate specific defense responses. Not necessary for vegetative growth at low temperatures, but plays a role in hyphal formation on solid medium. The polypeptide is Sphingolipid C9-methyltransferase (Candida albicans (strain SC5314 / ATCC MYA-2876) (Yeast)).